The following is a 361-amino-acid chain: Thymidine kinase (361 aa).

Residue 17-24 coordinates ATP; it reads GPHGVGKS. Glutamate 46 functions as the Proton acceptor in the catalytic mechanism. Substrate contacts are provided by tyrosine 64 and glutamine 88. Residue arginine 184 coordinates ATP. Arginine 190 serves as a coordination point for substrate.

It belongs to the herpesviridae thymidine kinase family. As to quaternary structure, homodimer.

The enzyme catalyses thymidine + ATP = dTMP + ADP + H(+). In terms of biological role, catalyzes the transfer of the gamma-phospho group of ATP to thymidine to generate dTMP in the salvage pathway of pyrimidine synthesis. The dTMP serves as a substrate for DNA polymerase during viral DNA replication. Allows the virus to be reactivated and to grow in non-proliferative cells lacking a high concentration of phosphorylated nucleic acid precursors. This Saimiriine herpesvirus 1 (strain MV-5-4-PSL) (SaHV-1) protein is Thymidine kinase.